A 118-amino-acid chain; its full sequence is Small ribosomal subunit protein uS13 (118 aa).

The disordered stretch occupies residues Ser94 to Lys118.

Belongs to the universal ribosomal protein uS13 family. As to quaternary structure, part of the 30S ribosomal subunit. Forms a loose heterodimer with protein S19. Forms two bridges to the 50S subunit in the 70S ribosome.

Located at the top of the head of the 30S subunit, it contacts several helices of the 16S rRNA. In the 70S ribosome it contacts the 23S rRNA (bridge B1a) and protein L5 of the 50S subunit (bridge B1b), connecting the 2 subunits; these bridges are implicated in subunit movement. Contacts the tRNAs in the A and P-sites. This Haemophilus influenzae (strain 86-028NP) protein is Small ribosomal subunit protein uS13.